The sequence spans 83 residues: Short neurotoxin VAN-29 (83 aa).

A signal peptide spans 1–21 (MKTLLLTLVVVTIVCLDLGYT). Disulfide bonds link cysteine 24-cysteine 45, cysteine 38-cysteine 62, cysteine 64-cysteine 75, and cysteine 76-cysteine 81.

The protein belongs to the three-finger toxin family. Short-chain subfamily. Type I alpha-neurotoxin sub-subfamily. Expressed by the venom gland.

Its subcellular location is the secreted. Binds to muscle nicotinic acetylcholine receptor (nAChR) and inhibit acetylcholine from binding to the receptor, thereby impairing neuromuscular transmission. The sequence is that of Short neurotoxin VAN-29 from Laticauda laticaudata (Blue-ringed sea krait).